Reading from the N-terminus, the 512-residue chain is Protein maph-9 (512 aa).

Disordered regions lie at residues 24–103 (ISRK…DDDF), 168–386 (DLSE…KNEK), and 481–512 (GNRL…RPFR). Composition is skewed to low complexity over residues 30 to 39 (TTTTSSGSSG) and 78 to 95 (STLS…STAA). Over residues 178 to 200 (TDHEDPSLTFRVDKELEQSESKK) the composition is skewed to basic and acidic residues. Residues 230–239 (PQTSANLSTK) show a composition bias toward polar residues. Composition is skewed to basic and acidic residues over residues 260-302 (KPSD…RENS) and 310-386 (VQDH…KNEK). Residues 267 to 429 (KEWLQKKERE…QLEESEKMTR (163 aa)) are a coiled coil. A compositionally biased stretch (polar residues) spans 502–512 (PGTTTSLRPFR).

In terms of tissue distribution, expressed in amphid and phasmid ciliated neurons.

Its subcellular location is the cell projection. The protein localises to the cilium. It is found in the cytoplasm. It localises to the cytoskeleton. The protein resides in the cilium axoneme. The chain is Protein maph-9 from Caenorhabditis elegans.